Reading from the N-terminus, the 73-residue chain is Homeodomain-only protein (73 aa).

A DNA-binding region (homeobox; degenerate) is located at residues 3–62 (AETASGPTEDQVEILEYNFNKVDKHPDSTTLCLIAAEAGLSEEETQKWFKQRLAKWRRSE).

Interacts with serum response factor (SRF). Component of a large complex containing histone deacetylases such as HDAC2. Interacts with the acetylated forms of HSPA1A and HSPA1B. Interacts with HSPA8. In terms of tissue distribution, widely expressed. Expressed in the heart, brain, placenta, lung, skeletal and smooth muscles, uterus, urinary bladder, kidney and spleen. Down-regulated in some types of cancer such as lung cancer, choriocarcinoma, head and neck squamous cell carcinoma and oral squamous cell carcinoma.

It localises to the nucleus. The protein localises to the cytoplasm. Its function is as follows. Atypical homeodomain protein which does not bind DNA and is required to modulate cardiac growth and development. Acts via its interaction with SRF, thereby modulating the expression of SRF-dependent cardiac-specific genes and cardiac development. Prevents SRF-dependent transcription either by inhibiting SRF binding to DNA or by recruiting histone deacetylase (HDAC) proteins that prevent transcription by SRF. Overexpression causes cardiac hypertrophy. May act as a tumor suppressor. Acts as a co-chaperone for HSPA1A and HSPA1B chaperone proteins and assists in chaperone-mediated protein refolding. In Homo sapiens (Human), this protein is Homeodomain-only protein (HOPX).